Reading from the N-terminus, the 458-residue chain is 3-isopropylmalate dehydratase large subunit (458 aa).

Residues C339, C399, and C402 each contribute to the [4Fe-4S] cluster site.

The protein belongs to the aconitase/IPM isomerase family. LeuC type 1 subfamily. Heterodimer of LeuC and LeuD. [4Fe-4S] cluster serves as cofactor.

It catalyses the reaction (2R,3S)-3-isopropylmalate = (2S)-2-isopropylmalate. It functions in the pathway amino-acid biosynthesis; L-leucine biosynthesis; L-leucine from 3-methyl-2-oxobutanoate: step 2/4. Functionally, catalyzes the isomerization between 2-isopropylmalate and 3-isopropylmalate, via the formation of 2-isopropylmaleate. This Lactococcus lactis subsp. cremoris (strain MG1363) protein is 3-isopropylmalate dehydratase large subunit.